The following is a 551-amino-acid chain: Probable CoA ligase CCL5 (551 aa).

ATP is bound by residues 204-212, 345-350, aspartate 431, 443-446, and lysine 537; these read SSGTTGASK, QGYGLT, and VVDR. An SBD1 region spans residues 274–345; the sequence is EIHEMLSAIE…ENYPTVSILQ (72 aa). Residues 346–410 are SBD2; sequence GYGLTESTGI…LRGPTIMKGY (65 aa).

This sequence belongs to the ATP-dependent AMP-binding enzyme family. In terms of tissue distribution, mostly expressed at low levels in glandular trichomes (lupulin glands) after flowering, and, to a lower extent, in stems, leaves, cones and flowers.

The protein localises to the cytoplasm. It localises to the cytosol. This chain is Probable CoA ligase CCL5, found in Humulus lupulus (European hop).